Consider the following 414-residue polypeptide: CCA-adding enzyme (414 aa).

ATP-binding residues include G8 and R11. G8 and R11 together coordinate CTP. 2 residues coordinate Mg(2+): D21 and D23. ATP-binding residues include R91, R137, and R140. CTP-binding residues include R91, R137, and R140.

It belongs to the tRNA nucleotidyltransferase/poly(A) polymerase family. Bacterial CCA-adding enzyme type 2 subfamily. Mg(2+) serves as cofactor.

The enzyme catalyses a tRNA precursor + 2 CTP + ATP = a tRNA with a 3' CCA end + 3 diphosphate. It catalyses the reaction a tRNA with a 3' CCA end + 2 CTP + ATP = a tRNA with a 3' CCACCA end + 3 diphosphate. Functionally, catalyzes the addition and repair of the essential 3'-terminal CCA sequence in tRNAs without using a nucleic acid template. Adds these three nucleotides in the order of C, C, and A to the tRNA nucleotide-73, using CTP and ATP as substrates and producing inorganic pyrophosphate. tRNA 3'-terminal CCA addition is required both for tRNA processing and repair. Also involved in tRNA surveillance by mediating tandem CCA addition to generate a CCACCA at the 3' terminus of unstable tRNAs. While stable tRNAs receive only 3'-terminal CCA, unstable tRNAs are marked with CCACCA and rapidly degraded. In Buchnera aphidicola subsp. Acyrthosiphon pisum (strain Tuc7), this protein is CCA-adding enzyme.